The primary structure comprises 57 residues: uncharacterized protein (57 aa).

The segment at methionine 1–asparagine 57 is disordered. Residues asparagine 8–asparagine 57 are compositionally biased toward low complexity.

This is an uncharacterized protein from Dictyostelium discoideum (Social amoeba).